A 378-amino-acid chain; its full sequence is Erythronate-4-phosphate dehydrogenase (378 aa).

The substrate site is built by serine 45 and threonine 66. Aspartate 146 and threonine 175 together coordinate NAD(+). Arginine 208 is a catalytic residue. Aspartate 232 contributes to the NAD(+) binding site. Residue glutamate 237 is part of the active site. Histidine 254 acts as the Proton donor in catalysis. Glycine 257 contributes to the NAD(+) binding site. Tyrosine 258 contributes to the substrate binding site.

It belongs to the D-isomer specific 2-hydroxyacid dehydrogenase family. PdxB subfamily. In terms of assembly, homodimer.

It is found in the cytoplasm. It catalyses the reaction 4-phospho-D-erythronate + NAD(+) = (R)-3-hydroxy-2-oxo-4-phosphooxybutanoate + NADH + H(+). Its pathway is cofactor biosynthesis; pyridoxine 5'-phosphate biosynthesis; pyridoxine 5'-phosphate from D-erythrose 4-phosphate: step 2/5. Functionally, catalyzes the oxidation of erythronate-4-phosphate to 3-hydroxy-2-oxo-4-phosphonooxybutanoate. The chain is Erythronate-4-phosphate dehydrogenase from Escherichia coli O6:K15:H31 (strain 536 / UPEC).